The sequence spans 172 residues: Crossover junction endodeoxyribonuclease RuvC (172 aa).

Active-site residues include aspartate 11, glutamate 70, and aspartate 142. Residues aspartate 11, glutamate 70, and aspartate 142 each coordinate Mg(2+).

It belongs to the RuvC family. Homodimer which binds Holliday junction (HJ) DNA. The HJ becomes 2-fold symmetrical on binding to RuvC with unstacked arms; it has a different conformation from HJ DNA in complex with RuvA. In the full resolvosome a probable DNA-RuvA(4)-RuvB(12)-RuvC(2) complex forms which resolves the HJ. Mg(2+) serves as cofactor.

The protein localises to the cytoplasm. The catalysed reaction is Endonucleolytic cleavage at a junction such as a reciprocal single-stranded crossover between two homologous DNA duplexes (Holliday junction).. Its function is as follows. The RuvA-RuvB-RuvC complex processes Holliday junction (HJ) DNA during genetic recombination and DNA repair. Endonuclease that resolves HJ intermediates. Cleaves cruciform DNA by making single-stranded nicks across the HJ at symmetrical positions within the homologous arms, yielding a 5'-phosphate and a 3'-hydroxyl group; requires a central core of homology in the junction. The consensus cleavage sequence is 5'-(A/T)TT(C/G)-3'. Cleavage occurs on the 3'-side of the TT dinucleotide at the point of strand exchange. HJ branch migration catalyzed by RuvA-RuvB allows RuvC to scan DNA until it finds its consensus sequence, where it cleaves and resolves the cruciform DNA. The polypeptide is Crossover junction endodeoxyribonuclease RuvC (Hydrogenovibrio crunogenus (strain DSM 25203 / XCL-2) (Thiomicrospira crunogena)).